Here is a 196-residue protein sequence, read N- to C-terminus: Orotate phosphoribosyltransferase (196 aa).

Position 117–125 (117–125) interacts with 5-phospho-alpha-D-ribose 1-diphosphate; that stretch reads EDVVTTGLS. Orotate contacts are provided by T121 and R149.

This sequence belongs to the purine/pyrimidine phosphoribosyltransferase family. PyrE subfamily. In terms of assembly, homodimer. Mg(2+) serves as cofactor.

The enzyme catalyses orotidine 5'-phosphate + diphosphate = orotate + 5-phospho-alpha-D-ribose 1-diphosphate. It participates in pyrimidine metabolism; UMP biosynthesis via de novo pathway; UMP from orotate: step 1/2. Its function is as follows. Catalyzes the transfer of a ribosyl phosphate group from 5-phosphoribose 1-diphosphate to orotate, leading to the formation of orotidine monophosphate (OMP). The chain is Orotate phosphoribosyltransferase from Sphingopyxis alaskensis (strain DSM 13593 / LMG 18877 / RB2256) (Sphingomonas alaskensis).